The following is a 100-amino-acid chain: MARKGLIQRENKRQKLEQKYHSIRRSSKKEIRQVLSLSDKWEIYGKLQSPPRNSAPTRLHRRCFSTGRPRANYRDFGLSGQILREMVHACLLPGATRSSW.

Positions 1–22 (MARKGLIQRENKRQKLEQKYHS) are disordered. Basic and acidic residues predominate over residues 7–20 (IQRENKRQKLEQKY).

Belongs to the universal ribosomal protein uS14 family. As to quaternary structure, part of the 30S ribosomal subunit.

It is found in the plastid. The protein localises to the chloroplast. Functionally, binds 16S rRNA, required for the assembly of 30S particles. The protein is Small ribosomal subunit protein uS14c of Daucus carota (Wild carrot).